Reading from the N-terminus, the 238-residue chain is Triosephosphate isomerase (238 aa).

Residue 7 to 9 participates in substrate binding; it reads NFK. Catalysis depends on histidine 91, which acts as the Electrophile. Glutamate 158 serves as the catalytic Proton acceptor. Substrate-binding residues include glycine 164 and serine 200.

The protein belongs to the triosephosphate isomerase family. In terms of assembly, homodimer.

Its subcellular location is the cytoplasm. It catalyses the reaction D-glyceraldehyde 3-phosphate = dihydroxyacetone phosphate. The protein operates within carbohydrate biosynthesis; gluconeogenesis. Its pathway is carbohydrate degradation; glycolysis; D-glyceraldehyde 3-phosphate from glycerone phosphate: step 1/1. In terms of biological role, involved in the gluconeogenesis. Catalyzes stereospecifically the conversion of dihydroxyacetone phosphate (DHAP) to D-glyceraldehyde-3-phosphate (G3P). This is Triosephosphate isomerase from Ureaplasma parvum serovar 3 (strain ATCC 27815 / 27 / NCTC 11736).